The sequence spans 458 residues: Phosphoglucosamine mutase (458 aa).

Catalysis depends on Ser-108, which acts as the Phosphoserine intermediate. Residues Ser-108, Asp-247, Asp-249, and Asp-251 each contribute to the Mg(2+) site. Ser-108 bears the Phosphoserine mark.

Belongs to the phosphohexose mutase family. The cofactor is Mg(2+). In terms of processing, activated by phosphorylation.

The enzyme catalyses alpha-D-glucosamine 1-phosphate = D-glucosamine 6-phosphate. In terms of biological role, catalyzes the conversion of glucosamine-6-phosphate to glucosamine-1-phosphate. The polypeptide is Phosphoglucosamine mutase (Nitrosomonas eutropha (strain DSM 101675 / C91 / Nm57)).